We begin with the raw amino-acid sequence, 744 residues long: Adenosylcobalamin-dependent ribonucleoside-triphosphate reductase (744 aa).

A disulfide bridge connects residues C120 and C424. The tract at residues 148 to 159 (SMPFSFLFDQLM) is effector region-1. Residues 169–318 (VNSNIKQIPK…ICNLIGKTVV (150 aa)) form an effector region-2 region. Catalysis depends on residues C413 and E415. Residues 570–631 (FHYAGYLIQR…SKNFASAGTV (62 aa)) form an adenosylcobalamin-binding-1 region. Positions 690–729 (LKQAPKEPINKKTYEERAALITDDVEEVFTKQNDDQKGLE) are adenosylcobalamin-binding-2.

This sequence belongs to the class II ribonucleoside-triphosphate reductase family. In terms of assembly, monomer. Adenosylcob(III)alamin serves as cofactor.

It catalyses the reaction a 2'-deoxyribonucleoside 5'-triphosphate + [thioredoxin]-disulfide + H2O = a ribonucleoside 5'-triphosphate + [thioredoxin]-dithiol. Its activity is regulated as follows. Allosterically regulated by ATP and dNTP. The sequence is that of Adenosylcobalamin-dependent ribonucleoside-triphosphate reductase (rtpR) from Lactobacillus acidophilus (strain ATCC 700396 / NCK56 / N2 / NCFM).